The sequence spans 190 residues: MEALHKKIREEGIVLSDQVLKVDAFLNHQIDPQLMKLIGDEFATLFKDSGITKIVTIEASGIAPAIMTGLNLGVPVIFARKHQSLTLTENLLSATVYSFTKQVESTVAISPRHLTSSDRVLIIDDFLANGKASQALISIIKQAGATVAGLGIVIEKSFQGGRAELDSQGYRVESLARVKSLAGGVVTFIE.

Xanthine is bound by residues leucine 20 and asparagine 27. Residue 128–132 (ANGKA) coordinates 5-phospho-alpha-D-ribose 1-diphosphate. Lysine 156 contributes to the xanthine binding site.

Belongs to the purine/pyrimidine phosphoribosyltransferase family. Xpt subfamily. Homodimer.

Its subcellular location is the cytoplasm. It carries out the reaction XMP + diphosphate = xanthine + 5-phospho-alpha-D-ribose 1-diphosphate. Its pathway is purine metabolism; XMP biosynthesis via salvage pathway; XMP from xanthine: step 1/1. Its function is as follows. Converts the preformed base xanthine, a product of nucleic acid breakdown, to xanthosine 5'-monophosphate (XMP), so it can be reused for RNA or DNA synthesis. The chain is Xanthine phosphoribosyltransferase from Pseudomonas fluorescens (strain ATCC BAA-477 / NRRL B-23932 / Pf-5).